A 299-amino-acid polypeptide reads, in one-letter code: Protein sprouty homolog 4 (299 aa).

Met1 is modified (N-acetylmethionine). Disordered stretches follow at residues 50–79 (NDYIDNPGLAPPSGPKRTRGGAPELAPTPA) and 92–127 (FSGRPSSVSSSSSTSSDQRLLDHMAPPPVADQASPR). The segment covering 92 to 107 (FSGRPSSVSSSSSTSS) has biased composition (low complexity). Ser125 carries the phosphoserine modification. In terms of domain architecture, SPR spans 166–273 (KCKECASPRT…GYDRLRRPGC (108 aa)).

Belongs to the sprouty family. As to quaternary structure, interacts (via C-terminus) with TESK1 (via both C- and N-termini); the interaction inhibits TESK1 kinase activity. Interacts with RAF1. Interacts with CAV1 (via C-terminus).

The protein resides in the cytoplasm. It localises to the cell projection. The protein localises to the ruffle membrane. Suppresses the insulin receptor and EGFR-transduced MAPK signaling pathway, but does not inhibit MAPK activation by a constitutively active mutant Ras. Probably impairs the formation of GTP-Ras. Inhibits Ras-independent, but not Ras-dependent, activation of RAF1. Represses integrin-mediated cell spreading via inhibition of TESK1-mediated phosphorylation of cofilin. This Bos taurus (Bovine) protein is Protein sprouty homolog 4 (SPRY4).